The primary structure comprises 332 residues: Delta-aminolevulinic acid dehydratase (332 aa).

Lys-202 (schiff-base intermediate with substrate) is an active-site residue. 5-aminolevulinate-binding residues include Arg-212 and Lys-225. Catalysis depends on Lys-256, which acts as the Schiff-base intermediate with substrate. 5-aminolevulinate is bound by residues Ser-282 and Tyr-321.

It belongs to the ALAD family. In terms of assembly, homohexamer.

The catalysed reaction is 2 5-aminolevulinate = porphobilinogen + 2 H2O + H(+). The protein operates within porphyrin-containing compound metabolism; protoporphyrin-IX biosynthesis; coproporphyrinogen-III from 5-aminolevulinate: step 1/4. Functionally, catalyzes an early step in the biosynthesis of tetrapyrroles. Binds two molecules of 5-aminolevulinate per subunit, each at a distinct site, and catalyzes their condensation to form porphobilinogen. The chain is Delta-aminolevulinic acid dehydratase (hemB) from Rhodobacter capsulatus (Rhodopseudomonas capsulata).